A 384-amino-acid chain; its full sequence is Protein V (384 aa).

Disordered regions lie at residues 1-23 (MDQDAFILKEDSEVEREAPGGRE) and 38-318 (SEPT…KKGH). Positions 7-20 (ILKEDSEVEREAPG) are enriched in basic and acidic residues. Residues 50-59 (LHNTINTPQG) are compositionally biased toward polar residues. The residue at position 68 (S68) is a Phosphoserine; by host. Residues 83–101 (RSGEESRVSGRTSKPEAEA) show a composition bias toward basic and acidic residues. Phosphoserine; by host is present on S125. A compositionally biased stretch (basic and acidic residues) spans 150-168 (GIEDENREMAAHPDKRGED). The segment covering 191 to 206 (ASNNGRSMEPGSSHSA) has biased composition (polar residues). Phosphoserine; by host occurs at positions 192, 249, 257, and 260. Positions 318, 337, 341, 353, 355, 358, 362, and 365 each coordinate Zn(2+).

The protein belongs to the paramyxoviruses V protein family. As to quaternary structure, interacts with host IFIH1/MDA5 and DHX58/LGP2. Interacts with host IRF3. Interacts with host RIGI regulatory protein (via CARDs domain) and host TRIM25 (via SPRY domain); these interactions prevent TRIM25-mediated ubiquitination of RIG-I and disrupts downstream RIG-I signaling.

The protein resides in the host cytoplasm. Plays an essential role in the inhibition of host immune response. Prevents the establishment of cellular antiviral state by blocking interferon-alpha/beta (IFN-alpha/beta) production and signaling pathway. Interacts with host IFIH1/MDA5 and DHX58/LGP2 to inhibit the transduction pathway involved in the activation of IFN-beta promoter, thus protecting the virus against cell antiviral state. Also interacts with and inhibits host IRF3. Blocks the type I interferon signaling pathway by disrupting the RIG-I signaling pathway. The sequence is that of Protein V (P/V/C) from Sendai virus (strain Harris) (SeV).